A 1441-amino-acid chain; its full sequence is Cleavage and polyadenylation specificity factor subunit 1 (1441 aa).

4 disordered regions span residues 404–435 (PASSVREAADKEEPPSKKKRVEPAVGWTGGKT), 545–569 (EEETPKAESTEQEPSAPKAEEDGRR), 713–775 (GGAR…PAPF), and 899–921 (FREKKPKPSKKKAEGCSTEEGSG). The segment covering 410–419 (EAADKEEPPS) has biased composition (basic and acidic residues). Phosphoserine is present on residues Ser-754 and Ser-764. Over residues 756-773 (SKEEARRSSQPPADRDPA) the composition is skewed to basic and acidic residues.

The protein belongs to the CPSF1 family. Component of the cleavage and polyadenylation specificity factor (CPSF) complex, composed of CPSF1, CPSF2, CPSF3, CPSF4 and FIP1L1. Found in a complex with CPSF1, FIP1L1 and PAPOLA. Interacts with FIP1L1 and SRRM1. Interacts with TUT1; the interaction is direct and mediates the recruitment of the CPSF complex on the 3'UTR of selected pre-mRNAs. Interacts with TENT2/GLD2.

The protein resides in the nucleus. The protein localises to the nucleoplasm. Functionally, component of the cleavage and polyadenylation specificity factor (CPSF) complex that plays a key role in pre-mRNA 3'-end formation, recognizing the AAUAAA signal sequence and interacting with poly(A) polymerase and other factors to bring about cleavage and poly(A) addition. This subunit is involved in the RNA recognition step of the polyadenylation reaction. May play a role in eye morphogenesis and the development of retinal ganglion cell projections to the midbrain. This is Cleavage and polyadenylation specificity factor subunit 1 (Cpsf1) from Mus musculus (Mouse).